A 371-amino-acid polypeptide reads, in one-letter code: Terpene cyclase 6 (371 aa).

Residues aspartate 144, asparagine 266, serine 270, and glutamate 274 each coordinate Mg(2+). The D(D/E)XX(D/E) motif motif lies at 144–148 (DDVME). Residues 266 to 274 (NDLYSYDKE) carry the NSE motif motif. A WxxxxxRY motif motif is present at residues 352 to 359 (HHATLGRY). The (2E,6E)-farnesyl diphosphate site is built by arginine 358 and tyrosine 359.

It belongs to the terpene synthase family. As to quaternary structure, homodimer. The cofactor is Mg(2+).

It catalyses the reaction (2E,6E)-farnesyl diphosphate + H2O = (-)-alpha-acorenol + diphosphate. The protein operates within sesquiterpene biosynthesis. In terms of biological role, terpene cyclase that catalyzes the cyclization of farnesyl diphosphate (FPP) to the spirocyclic sesquiterpene alpha-acorenol. In Gibberella fujikuroi (strain CBS 195.34 / IMI 58289 / NRRL A-6831) (Bakanae and foot rot disease fungus), this protein is Terpene cyclase 6.